The primary structure comprises 145 residues: Androgenic gland hormone (145 aa).

The N-terminal stretch at M1–A21 is a signal peptide. Cystine bridges form between C33–C122, C42–C59, C44–C140, and C123–C131. Positions S68 to S112 are cleaved as a propeptide — c peptide. A glycan (N-linked (GlcNAc...) asparagine) is linked at N132.

As to expression, androgenic gland.

It localises to the secreted. Controls sex differentiation and the formation of male appendages, spermatogenesis, pigmentation, and male specific behavior. This Porcellio scaber (Common rough woodlouse) protein is Androgenic gland hormone (AGH).